The chain runs to 575 residues: Alpha-(1,6)-fucosyltransferase (575 aa).

The Cytoplasmic portion of the chain corresponds to 1-9; sequence MRPWTGSWR. Residues 10–30 traverse the membrane as a helical; Signal-anchor for type II membrane protein segment; it reads WIMLILFAWGTLLFYIGGHLV. Over 31–575 the chain is Lumenal; the sequence is RDNDHPDHSS…KVPHVPEAEK (545 aa). 3 disulfides stabilise this stretch: Cys-204/Cys-266, Cys-212/Cys-230, and Cys-218/Cys-222. Residues 206–493 form the GT23 domain; sequence KAKKLVCNIN…PDASANFHSL (288 aa). Phosphoserine is present on Ser-278. The short motif at 299–305 is the SH3-binding element; sequence PRPPYLP. The tract at residues 365-366 is important for donor substrate binding; the sequence is RR. Cys-465 and Cys-472 form a disulfide bridge. The SH3 domain maps to 502-563; it reads QNAHNQIAIY…PSYKVREKIE (62 aa).

It belongs to the glycosyltransferase 23 family. Post-translationally, tyrosine phosphorylated by PKDCC/VLK. In terms of tissue distribution, highest expression found in brain. Also found in heart, lung, spleen and kidney.

Its subcellular location is the golgi apparatus. The protein localises to the golgi stack membrane. It carries out the reaction N(4)-{beta-D-GlcNAc-(1-&gt;2)-alpha-D-Man-(1-&gt;3)-[beta-D-GlcNAc-(1-&gt;2)-alpha-D-Man-(1-&gt;6)]-beta-D-Man-(1-&gt;4)-beta-D-GlcNAc-(1-&gt;4)-beta-D-GlcNAc}-L-asparaginyl-[protein] + GDP-beta-L-fucose = an N(4)-{beta-D-GlcNAc-(1-&gt;2)-alpha-D-Man-(1-&gt;3)-[beta-D-GlcNAc-(1-&gt;2)-alpha-D-Man-(1-&gt;6)]-beta-D-Man-(1-&gt;4)-beta-D-GlcNAc-(1-&gt;4)-[alpha-L-Fuc-(1-&gt;6)]-beta-D-GlcNAc}-L-asparaginyl-[protein] + GDP + H(+). Its pathway is protein modification; protein glycosylation. In terms of biological role, catalyzes the addition of fucose in alpha 1-6 linkage to the first GlcNAc residue, next to the peptide chains in N-glycans. The protein is Alpha-(1,6)-fucosyltransferase (FUT8) of Bos taurus (Bovine).